Consider the following 335-residue polypeptide: Protein-arginine kinase (335 aa).

The 224-residue stretch at 20–243 (IVMSSRIRLA…QQIINEEMQI (224 aa)) folds into the Phosphagen kinase C-terminal domain. ATP contacts are provided by residues 23 to 27 (SSRIR), His-81, Arg-114, 165 to 169 (RASVM), and 196 to 201 (RGIYGE).

This sequence belongs to the ATP:guanido phosphotransferase family.

The enzyme catalyses L-arginyl-[protein] + ATP = N(omega)-phospho-L-arginyl-[protein] + ADP + H(+). Functionally, catalyzes the specific phosphorylation of arginine residues in proteins. The sequence is that of Protein-arginine kinase from Staphylococcus haemolyticus (strain JCSC1435).